Reading from the N-terminus, the 446-residue chain is Tubulin beta-2 chain (446 aa).

GTP-binding residues include Gln-11, Glu-69, Ser-138, Gly-142, Thr-143, Gly-144, Asn-204, and Asn-226. Glu-69 lines the Mg(2+) pocket. Positions 424-446 (QYQEATADEEGEFDEDEEGGGDE) are disordered. Residues 429 to 446 (TADEEGEFDEDEEGGGDE) show a composition bias toward acidic residues.

The protein belongs to the tubulin family. As to quaternary structure, dimer of alpha and beta chains. A typical microtubule is a hollow water-filled tube with an outer diameter of 25 nm and an inner diameter of 15 nM. Alpha-beta heterodimers associate head-to-tail to form protofilaments running lengthwise along the microtubule wall with the beta-tubulin subunit facing the microtubule plus end conferring a structural polarity. Microtubules usually have 13 protofilaments but different protofilament numbers can be found in some organisms and specialized cells. Mg(2+) is required as a cofactor.

The protein resides in the cytoplasm. The protein localises to the cytoskeleton. Tubulin is the major constituent of microtubules, a cylinder consisting of laterally associated linear protofilaments composed of alpha- and beta-tubulin heterodimers. Microtubules grow by the addition of GTP-tubulin dimers to the microtubule end, where a stabilizing cap forms. Below the cap, tubulin dimers are in GDP-bound state, owing to GTPase activity of alpha-tubulin. This is Tubulin beta-2 chain (betaTub85D) from Drosophila erecta (Fruit fly).